A 133-amino-acid polypeptide reads, in one-letter code: Nickel-responsive regulator (133 aa).

Ni(2+)-binding residues include His76, His87, His89, and Cys95.

Belongs to the transcriptional regulatory CopG/NikR family. Homotetramer. The cofactor is Ni(2+).

In terms of biological role, transcriptional repressor of the nikABCDE operon. Is active in the presence of excessive concentrations of intracellular nickel. The protein is Nickel-responsive regulator of Shigella dysenteriae serotype 1 (strain Sd197).